Here is a 156-residue protein sequence, read N- to C-terminus: Protein CURVATURE THYLAKOID 1C, chloroplastic (156 aa).

The N-terminal 55 residues, 1 to 55 (MASISATLPSPLLLTQRKSNLTSIQKLPFSLTRGTNDLSPLSLTRNPSSISLMVK), are a transit peptide targeting the chloroplast. Over 56-83 (ASGESSDSSTDLDVVSTIQNVWDKSEDR) the chain is Stromal. The helical transmembrane segment at 84 to 104 (LGLIGLGFAGIVALWASLNLI) threads the bilayer. Over 105–109 (TAIDK) the chain is Lumenal. The chain crosses the membrane as a helical span at residues 110–130 (LPVISSGFELVGILFSTWFTY). Residues 131–156 (RYLLFKPDRQELSKIVKKSVADILGQ) are Stromal-facing.

The protein belongs to the CURT family. In terms of assembly, homo- and heterodimers and trimers. Interacts with PSAD2.

The protein resides in the plastid. The protein localises to the chloroplast thylakoid membrane. Its function is as follows. Determines thylakoid architecture by inducing membrane curvature. This is Protein CURVATURE THYLAKOID 1C, chloroplastic (CURT1C) from Arabidopsis thaliana (Mouse-ear cress).